The following is a 158-amino-acid chain: Mitotic-spindle organizing protein 2B (158 aa).

S34 bears the Phosphoserine mark. The interval 84–158 (RLASEPQDPA…PGKSPTRGST (75 aa)) is disordered. Residues 111–122 (GSAALGGALALA) are compositionally biased toward low complexity. The span at 128 to 140 (EGSSQRMPRQPSA) shows a compositional bias: polar residues. The residue at position 152 (S152) is a Phosphoserine.

This sequence belongs to the MOZART2 family. In terms of assembly, associates with the gamma-tubulin ring complex (gTuRC) consisting of TUBGCP2, TUBGCP3, TUBGCP4, TUBGCP5 and TUBGCP6 and gamma-tubulin TUBG1 or TUBG2; within the complex, interacts with TUBGCP2; the interaction plays a role in gTuRC activation. Interacts with TUBG1.

The protein localises to the cytoplasm. It is found in the cytoskeleton. The protein resides in the microtubule organizing center. It localises to the centrosome. Its subcellular location is the spindle. In terms of biological role, required for the recruitment and the assembly of the gamma-tubulin ring complex (gTuRC) at the centrosome. The gTuRC regulates the minus-end nucleation of alpha-beta tubulin heterodimers that grow into microtubule protafilaments, a critical step in centrosome duplication and spindle formation. The polypeptide is Mitotic-spindle organizing protein 2B (MZT2B) (Homo sapiens (Human)).